The primary structure comprises 103 residues: Large ribosomal subunit protein bL21 (103 aa).

The protein belongs to the bacterial ribosomal protein bL21 family. As to quaternary structure, part of the 50S ribosomal subunit. Contacts protein L20.

In terms of biological role, this protein binds to 23S rRNA in the presence of protein L20. The protein is Large ribosomal subunit protein bL21 of Pseudomonas aeruginosa (strain LESB58).